The following is a 130-amino-acid chain: Small ribosomal subunit protein uS11 (130 aa).

This sequence belongs to the universal ribosomal protein uS11 family. In terms of assembly, part of the 30S ribosomal subunit. Interacts with proteins S7 and S18. Binds to IF-3.

Functionally, located on the platform of the 30S subunit, it bridges several disparate RNA helices of the 16S rRNA. Forms part of the Shine-Dalgarno cleft in the 70S ribosome. The protein is Small ribosomal subunit protein uS11 of Thermotoga maritima (strain ATCC 43589 / DSM 3109 / JCM 10099 / NBRC 100826 / MSB8).